A 208-amino-acid polypeptide reads, in one-letter code: MARYTGPTCKLARREGADLFLKSGIRSLDSKCKVTQLPGMHGASARRQKGTEYGLQLREKQKIRRIYGILEKQFRLYYKKASQKKGSTGENLLSLLECRLDNVVYRMGFASTRAEARQLVSHKSIMVNGLVVNIPSYQVSVNDKISIREKAKKQSRIQLALELSGQSTQPQWLDVDNKTLKGVFKNVPSRDELPSDIQEHLIVELYSK.

The S4 RNA-binding domain maps to 98–160; it reads CRLDNVVYRM…AKKQSRIQLA (63 aa).

It belongs to the universal ribosomal protein uS4 family. Part of the 30S ribosomal subunit. Contacts protein S5. The interaction surface between S4 and S5 is involved in control of translational fidelity.

In terms of biological role, one of the primary rRNA binding proteins, it binds directly to 16S rRNA where it nucleates assembly of the body of the 30S subunit. With S5 and S12 plays an important role in translational accuracy. This is Small ribosomal subunit protein uS4 from Vesicomyosocius okutanii subsp. Calyptogena okutanii (strain HA).